The following is a 1177-amino-acid chain: Lysylphosphatidylglycerol biosynthesis bifunctional protein LysX (1177 aa).

Disordered regions lie at residues 1-40 (MRRA…AKFV) and 61-85 (VTLA…PANR). The interval 1–676 (MRRAGRSRQF…LLHHDGSAPD (676 aa)) is phosphatidylglycerol lysyltransferase. Residues 8 to 21 (RQFSSVEEAFSTSA) show a composition bias toward polar residues. The segment covering 65-82 (SPGSRSGSGPRSGPRLGP) has biased composition (low complexity). Helical transmembrane passes span 93–113 (VPAA…LGSV), 135–155 (FPDT…ALTA), 159–179 (IAWL…VADI), 189–209 (IFGE…LVLA), 227–247 (AVLV…VELF), and 281–301 (VFLN…ATIV). The segment at 673-693 (SAPDVSGLRPERTDAEEARSR) is disordered. Positions 677-1177 (VSGLRPERTD…TLPFPLAKPH (501 aa)) are lysine--tRNA ligase. Over residues 681–693 (RPERTDAEEARSR) the composition is skewed to basic and acidic residues. Mg(2+)-binding residues include Asp-1089 and Glu-1096.

In the N-terminal section; belongs to the LPG synthetase family. The protein in the C-terminal section; belongs to the class-II aminoacyl-tRNA synthetase family. Mg(2+) is required as a cofactor.

Its subcellular location is the cell membrane. The catalysed reaction is tRNA(Lys) + L-lysine + ATP = L-lysyl-tRNA(Lys) + AMP + diphosphate. It catalyses the reaction L-lysyl-tRNA(Lys) + a 1,2-diacyl-sn-glycero-3-phospho-(1'-sn-glycerol) = a 1,2-diacyl-sn-glycero-3-phospho-1'-(3'-O-L-lysyl)-sn-glycerol + tRNA(Lys). Functionally, catalyzes the production of L-lysyl-tRNA(Lys)transfer and the transfer of a lysyl group from L-lysyl-tRNA(Lys) to membrane-bound phosphatidylglycerol (PG), which produces lysylphosphatidylglycerol (LPG), one of the components of the bacterial membrane with a positive net charge. LPG synthesis contributes to the resistance to cationic antimicrobial peptides (CAMPs) and likely protects M.tuberculosis against the CAMPs produced by competiting microorganisms (bacteriocins). In fact, the modification of anionic phosphatidylglycerol with positively charged L-lysine results in repulsion of the peptides. In Mycobacterium avium (strain 104), this protein is Lysylphosphatidylglycerol biosynthesis bifunctional protein LysX (lysX).